The following is a 464-amino-acid chain: mRNA capping enzyme LEF-4 (464 aa).

Positions 1–204 are mRNA triphosphatase; it reads MDYGDFVIEK…NVMCNIIADM (204 aa). The tract at residues 205–464 is mRNA guanylyltransferase; the sequence is EALTDAQNIS…KHRRDRIVPN (260 aa). The active-site N6-GMP-lysine intermediate is K255.

It belongs to the baculoviridae LEF-4 family. Interacts with LEF-8, LEF-9, and p47.

Its subcellular location is the host cytoplasm. It localises to the host nucleus. It carries out the reaction a 5'-end diphospho-ribonucleoside in mRNA + GTP + H(+) = a 5'-end (5'-triphosphoguanosine)-ribonucleoside in mRNA + diphosphate. The catalysed reaction is a 5'-end triphospho-ribonucleoside in mRNA + H2O = a 5'-end diphospho-ribonucleoside in mRNA + phosphate + H(+). In terms of biological role, component of the viral DNA-dependent RNA polymerase that catalyzes two reactions involved in viral RNA cap formation: an RNA 5'-triphosphatase that hydrolyzes the gamma phosphate of triphosphate-terminated RNA and a guanylyltransferase that reacts with GTP to form a covalent protein-guanylate adduct. Therefore plays an essential role in late and very late gene expression. The protein is mRNA capping enzyme LEF-4 (LEF-4) of Autographa californica nuclear polyhedrosis virus (AcMNPV).